Here is a 409-residue protein sequence, read N- to C-terminus: Putative fatty acyl-CoA reductase 7 (409 aa).

It belongs to the fatty acyl-CoA reductase family.

This chain is Putative fatty acyl-CoA reductase 7 (FAR7), found in Arabidopsis thaliana (Mouse-ear cress).